Reading from the N-terminus, the 154-residue chain is 3-dehydroquinate dehydratase (154 aa).

The Proton acceptor role is filled by tyrosine 23. Positions 75, 81, and 88 each coordinate substrate. The active-site Proton donor is histidine 101. Residues 102-103 and arginine 112 each bind substrate; that span reads LS.

Belongs to the type-II 3-dehydroquinase family. As to quaternary structure, homododecamer.

It catalyses the reaction 3-dehydroquinate = 3-dehydroshikimate + H2O. It functions in the pathway metabolic intermediate biosynthesis; chorismate biosynthesis; chorismate from D-erythrose 4-phosphate and phosphoenolpyruvate: step 3/7. Functionally, catalyzes a trans-dehydration via an enolate intermediate. This is 3-dehydroquinate dehydratase from Teredinibacter turnerae (strain ATCC 39867 / T7901).